Here is a 449-residue protein sequence, read N- to C-terminus: Probable glycine dehydrogenase (decarboxylating) subunit 1 (449 aa).

The protein belongs to the GcvP family. N-terminal subunit subfamily. As to quaternary structure, the glycine cleavage system is composed of four proteins: P, T, L and H. In this organism, the P 'protein' is a heterodimer of two subunits.

The enzyme catalyses N(6)-[(R)-lipoyl]-L-lysyl-[glycine-cleavage complex H protein] + glycine + H(+) = N(6)-[(R)-S(8)-aminomethyldihydrolipoyl]-L-lysyl-[glycine-cleavage complex H protein] + CO2. In terms of biological role, the glycine cleavage system catalyzes the degradation of glycine. The P protein binds the alpha-amino group of glycine through its pyridoxal phosphate cofactor; CO(2) is released and the remaining methylamine moiety is then transferred to the lipoamide cofactor of the H protein. The polypeptide is Probable glycine dehydrogenase (decarboxylating) subunit 1 (Pyrococcus abyssi (strain GE5 / Orsay)).